We begin with the raw amino-acid sequence, 126 residues long: Methylglyoxal synthase (126 aa).

An MGS-like domain is found at 1-126 (MKALALIAHD…IAWIRKGTPQ (126 aa)). Residues histidine 9, lysine 13, 35–38 (TGTT), and 55–56 (SG) contribute to the substrate site. Residue aspartate 61 is the Proton donor/acceptor of the active site. Position 88 (histidine 88) interacts with substrate.

It belongs to the methylglyoxal synthase family.

The enzyme catalyses dihydroxyacetone phosphate = methylglyoxal + phosphate. In terms of biological role, catalyzes the formation of methylglyoxal from dihydroxyacetone phosphate. In Thermus thermophilus (strain ATCC BAA-163 / DSM 7039 / HB27), this protein is Methylglyoxal synthase.